The following is a 378-amino-acid chain: Mating-type protein MAT-1 (378 aa).

A DNA-binding region (alpha box) is located at residues 60 to 117; it reads KAKKALNAFVGFRCYYIAIPAFKPWPMKKLSNLISLLWEGDPNKSLWSLMAKAWSNIR. Residues 235-256 form a disordered region; it reads SQVDQARVAARNRRRAKRQSAR. The span at 244-253 shows a compositional bias: basic residues; that stretch reads ARNRRRAKRQ.

It belongs to the MATALPHA1 family.

It is found in the nucleus. In terms of biological role, mating type proteins are sequence specific DNA-binding proteins that act as master switches in fungal differentiation by controlling gene expression in a cell type-specific fashion. Transcriptional activator that induces the transcription of alpha-specific genes. The chain is Mating-type protein MAT-1 (MAT1) from Cochliobolus ellisii (Curvularia ellisii).